A 330-amino-acid polypeptide reads, in one-letter code: UPF0324 membrane protein PG_2004 (330 aa).

9 helical membrane passes run 13 to 31 (IAYP…GSLV), 36 to 58 (PFTS…LIFG), 71 to 93 (VLLQ…LASG), 97 to 114 (MMFT…GWFI), 126 to 148 (SALI…GPIL), 158 to 180 (ALGT…GHWL), 248 to 270 (VPLF…EAYF), 285 to 307 (LTLS…VGVR), and 312 to 329 (GLFL…FILL).

Belongs to the UPF0324 family.

It is found in the cell membrane. The chain is UPF0324 membrane protein PG_2004 from Porphyromonas gingivalis (strain ATCC BAA-308 / W83).